Here is a 246-residue protein sequence, read N- to C-terminus: MFDIGWSELLVIAVVLIVVVGPKDLPPMIRAFGKTMAGLRKMAGDFRTQFDEALKEADMDDVRQTISDVRNLNPTNSLRDAMNPLRQLGNEIKSDLQKATSPSDGLSSTAAPATSEPVAPLVNVPEPDMKLPDSPPAVAAAPAPVAAASVAAEKPKRARAKSIATVEAEAVAAKPKRVSRSKAVATPETTVATNASEPASPKPTVKTIAKKATVKKIAAEKSVAVADAKPAKAARTKAAKPKKDEA.

A helical membrane pass occupies residues methionine 1 to glycine 21. Disordered regions lie at residues serine 94–valine 122, serine 179–threonine 204, and valine 225–alanine 246. Polar residues-rich tracts occupy residues glutamine 97–proline 112 and proline 187–glutamate 197.

This sequence belongs to the TatB family. In terms of assembly, the Tat system comprises two distinct complexes: a TatABC complex, containing multiple copies of TatA, TatB and TatC subunits, and a separate TatA complex, containing only TatA subunits. Substrates initially bind to the TatABC complex, which probably triggers association of the separate TatA complex to form the active translocon.

The protein resides in the cell inner membrane. Functionally, part of the twin-arginine translocation (Tat) system that transports large folded proteins containing a characteristic twin-arginine motif in their signal peptide across membranes. Together with TatC, TatB is part of a receptor directly interacting with Tat signal peptides. TatB may form an oligomeric binding site that transiently accommodates folded Tat precursor proteins before their translocation. The protein is Sec-independent protein translocase protein TatB of Agrobacterium fabrum (strain C58 / ATCC 33970) (Agrobacterium tumefaciens (strain C58)).